The primary structure comprises 270 residues: ATP synthase subunit a 1 (270 aa).

Helical transmembrane passes span 38–58, 98–118, 143–163, 208–228, and 239–259; these read VHIDSLFFSWFTGLIFLGIFY, IAPLALTIFCWVFLMNVMDLV, DVNITMAMALGVFALMIYYSI, LFGNMFAGEVVFILCAAMLPW, and AIFHILVITIQAFVFMMLTIV.

The protein belongs to the ATPase A chain family. As to quaternary structure, F-type ATPases have 2 components, CF(1) - the catalytic core - and CF(0) - the membrane proton channel. CF(1) has five subunits: alpha(3), beta(3), gamma(1), delta(1), epsilon(1). CF(0) has three main subunits: a(1), b(2) and c(9-12). The alpha and beta chains form an alternating ring which encloses part of the gamma chain. CF(1) is attached to CF(0) by a central stalk formed by the gamma and epsilon chains, while a peripheral stalk is formed by the delta and b chains.

It localises to the cell inner membrane. Its function is as follows. Key component of the proton channel; it plays a direct role in the translocation of protons across the membrane. This Vibrio campbellii (strain ATCC BAA-1116) protein is ATP synthase subunit a 1.